The sequence spans 161 residues: Large ribosomal subunit protein uL15 (161 aa).

The disordered stretch occupies residues 1 to 44 (MKLSEIADNAGSRKKRMRVGRGIGSGKGKTAGRGGKGQTARSGV). Over residues 21 to 37 (RGIGSGKGKTAGRGGKG) the composition is skewed to gly residues.

This sequence belongs to the universal ribosomal protein uL15 family. In terms of assembly, part of the 50S ribosomal subunit.

Its function is as follows. Binds to the 23S rRNA. This Rhodopseudomonas palustris (strain BisA53) protein is Large ribosomal subunit protein uL15.